The chain runs to 225 residues: Holliday junction branch migration complex subunit RuvA (225 aa).

Residues 1–71 are domain I; that stretch reads MISWINGDLV…EDSDLLFGFT (71 aa). A domain II region spans residues 72–150; the sequence is SKDQKNFFIE…SEILSEEEKS (79 aa). The segment at 151 to 161 is flexible linker; that stretch reads KDEFEIKDPEI. Positions 161-225 are domain III; the sequence is IIKMIEDLQL…LDEDSSNKDR (65 aa).

The protein belongs to the RuvA family. As to quaternary structure, homotetramer. Forms an RuvA(8)-RuvB(12)-Holliday junction (HJ) complex. HJ DNA is sandwiched between 2 RuvA tetramers; dsDNA enters through RuvA and exits via RuvB. An RuvB hexamer assembles on each DNA strand where it exits the tetramer. Each RuvB hexamer is contacted by two RuvA subunits (via domain III) on 2 adjacent RuvB subunits; this complex drives branch migration. In the full resolvosome a probable DNA-RuvA(4)-RuvB(12)-RuvC(2) complex forms which resolves the HJ.

The protein localises to the cytoplasm. The RuvA-RuvB-RuvC complex processes Holliday junction (HJ) DNA during genetic recombination and DNA repair, while the RuvA-RuvB complex plays an important role in the rescue of blocked DNA replication forks via replication fork reversal (RFR). RuvA specifically binds to HJ cruciform DNA, conferring on it an open structure. The RuvB hexamer acts as an ATP-dependent pump, pulling dsDNA into and through the RuvAB complex. HJ branch migration allows RuvC to scan DNA until it finds its consensus sequence, where it cleaves and resolves the cruciform DNA. This chain is Holliday junction branch migration complex subunit RuvA, found in Prochlorococcus marinus (strain AS9601).